A 443-amino-acid polypeptide reads, in one-letter code: ATP-dependent protease ATPase subunit HslU (443 aa).

ATP contacts are provided by residues Ile-18, 60-65 (GVGKTE), Asp-256, Glu-321, and Arg-393.

The protein belongs to the ClpX chaperone family. HslU subfamily. As to quaternary structure, a double ring-shaped homohexamer of HslV is capped on each side by a ring-shaped HslU homohexamer. The assembly of the HslU/HslV complex is dependent on binding of ATP.

It localises to the cytoplasm. In terms of biological role, ATPase subunit of a proteasome-like degradation complex; this subunit has chaperone activity. The binding of ATP and its subsequent hydrolysis by HslU are essential for unfolding of protein substrates subsequently hydrolyzed by HslV. HslU recognizes the N-terminal part of its protein substrates and unfolds these before they are guided to HslV for hydrolysis. The chain is ATP-dependent protease ATPase subunit HslU from Yersinia pestis bv. Antiqua (strain Antiqua).